The primary structure comprises 494 residues: Amidophosphoribosyltransferase (494 aa).

Positions 1-10 (MFNYSGLNEE) are excised as a propeptide. C11 acts as the Nucleophile in catalysis. A Glutamine amidotransferase type-2 domain is found at 11 to 231 (CGVFGIWNHP…AGEYVVINDK (221 aa)). S294, D356, and D357 together coordinate Mg(2+).

It in the C-terminal section; belongs to the purine/pyrimidine phosphoribosyltransferase family. The cofactor is Mg(2+).

The catalysed reaction is 5-phospho-beta-D-ribosylamine + L-glutamate + diphosphate = 5-phospho-alpha-D-ribose 1-diphosphate + L-glutamine + H2O. The protein operates within purine metabolism; IMP biosynthesis via de novo pathway; N(1)-(5-phospho-D-ribosyl)glycinamide from 5-phospho-alpha-D-ribose 1-diphosphate: step 1/2. Functionally, catalyzes the formation of phosphoribosylamine from phosphoribosylpyrophosphate (PRPP) and glutamine. This is Amidophosphoribosyltransferase from Staphylococcus aureus (strain Mu50 / ATCC 700699).